A 131-amino-acid polypeptide reads, in one-letter code: Cytochrome b5 (131 aa).

In terms of domain architecture, Cytochrome b5 heme-binding spans 3-79 (AKIFSLDEVS…LEEYLIGSLD (77 aa)). 2 residues coordinate heme: His-38 and His-62. A helical membrane pass occupies residues 108–125 (IILPALAIIGALVYKYVI).

It belongs to the cytochrome b5 family.

The protein resides in the endoplasmic reticulum membrane. Its subcellular location is the microsome membrane. Functionally, membrane bound hemoprotein which function as an electron carrier for several membrane bound oxygenases. The polypeptide is Cytochrome b5 (Rhizopus stolonifer (Rhizopus nigricans)).